A 505-amino-acid chain; its full sequence is Histidine ammonia-lyase (505 aa).

The segment at residues 141-143 is a cross-link (5-imidazolinone (Ala-Gly)); sequence ASG. Position 142 is a 2,3-didehydroalanine (Ser) (S142).

This sequence belongs to the PAL/histidase family. Post-translationally, contains an active site 4-methylidene-imidazol-5-one (MIO), which is formed autocatalytically by cyclization and dehydration of residues Ala-Ser-Gly.

The protein localises to the cytoplasm. The catalysed reaction is L-histidine = trans-urocanate + NH4(+). Its pathway is amino-acid degradation; L-histidine degradation into L-glutamate; N-formimidoyl-L-glutamate from L-histidine: step 1/3. The polypeptide is Histidine ammonia-lyase (Bacillus mycoides (strain KBAB4) (Bacillus weihenstephanensis)).